The sequence spans 277 residues: Thymidylate synthase (277 aa).

Arg21 lines the dUMP pocket. His51 serves as a coordination point for (6R)-5,10-methylene-5,6,7,8-tetrahydrofolate. Residue 126–127 coordinates dUMP; it reads RR. Catalysis depends on Cys159, which acts as the Nucleophile. DUMP contacts are provided by residues 179-182, Asn190, and 220-222; these read RSGD and HLY. Asp182 contacts (6R)-5,10-methylene-5,6,7,8-tetrahydrofolate. Ala276 contributes to the (6R)-5,10-methylene-5,6,7,8-tetrahydrofolate binding site.

The protein belongs to the thymidylate synthase family. Bacterial-type ThyA subfamily. In terms of assembly, homodimer.

The protein localises to the cytoplasm. The catalysed reaction is dUMP + (6R)-5,10-methylene-5,6,7,8-tetrahydrofolate = 7,8-dihydrofolate + dTMP. The protein operates within pyrimidine metabolism; dTTP biosynthesis. In terms of biological role, catalyzes the reductive methylation of 2'-deoxyuridine-5'-monophosphate (dUMP) to 2'-deoxythymidine-5'-monophosphate (dTMP) while utilizing 5,10-methylenetetrahydrofolate (mTHF) as the methyl donor and reductant in the reaction, yielding dihydrofolate (DHF) as a by-product. This enzymatic reaction provides an intracellular de novo source of dTMP, an essential precursor for DNA biosynthesis. In Alcanivorax borkumensis (strain ATCC 700651 / DSM 11573 / NCIMB 13689 / SK2), this protein is Thymidylate synthase.